An 876-amino-acid chain; its full sequence is Inter-alpha-trypsin inhibitor heavy chain H3 (876 aa).

Residues 1 to 18 (MVALSHLGSALQLGSLWG) form the signal peptide. Positions 19 to 31 (FPRSPFRLLGKRS) are excised as a propeptide. Positions 26–155 (LLGKRSLPEG…KVTFELTYEE (130 aa)) constitute a VIT domain. An N-linked (GlcNAc...) asparagine glycan is attached at N88. The region spanning 281-464 (NVAFVIDISG…LQLQGFYEEV (184 aa)) is the VWFA domain. N-linked (GlcNAc...) asparagine glycosylation is present at N577. Aspartate 1-(chondroitin 4-sulfate)-ester is present on D637. Positions 638–876 (PHFIIQVPEK…HTDYIVPNLF (239 aa)) are excised as a propeptide.

It belongs to the ITIH family. In terms of assembly, I-alpha-I plasma protease inhibitors are assembled from one or two heavy chains (HC) and one light chain, bikunin. Pre-alpha-inhibitor (P-alpha-I) is composed of ITIH3/HC3 and bikunin. Post-translationally, heavy chains are linked to bikunin via chondroitin 4-sulfate esterified to the alpha-carboxyl of the C-terminal aspartate after propeptide cleavage.

Its subcellular location is the secreted. In terms of biological role, may act as a carrier of hyaluronan in serum or as a binding protein between hyaluronan and other matrix protein, including those on cell surfaces in tissues to regulate the localization, synthesis and degradation of hyaluronan which are essential to cells undergoing biological processes. This Pongo abelii (Sumatran orangutan) protein is Inter-alpha-trypsin inhibitor heavy chain H3 (ITIH3).